Here is a 237-residue protein sequence, read N- to C-terminus: E3 ubiquitin-protein ligase RNF166 (237 aa).

An RING-type zinc finger spans residues 33-73 (CPICLEVYHRPVAIGSCGHTFCGECLQPCLQVPSPLCPLCR). Zn(2+) is bound by residues cysteine 98, cysteine 101, histidine 113, and cysteine 117. The segment at 98–117 (CRGCNKKVTLAKMRVHISSC) adopts a C2HC RNF-type zinc-finger fold. Residues 221 to 237 (DEEAAFQAALALSLSEN) enclose the UIM domain.

It is found in the cytoplasm. It carries out the reaction S-ubiquitinyl-[E2 ubiquitin-conjugating enzyme]-L-cysteine + [acceptor protein]-L-lysine = [E2 ubiquitin-conjugating enzyme]-L-cysteine + N(6)-ubiquitinyl-[acceptor protein]-L-lysine.. The protein operates within protein modification; protein ubiquitination. Functionally, E3 ubiquitin-protein ligase that promotes the ubiquitination of different substrates. In turn, participates in different biological processes including interferon production or autophagy. Plays a role in the activation of RNA virus-induced interferon-beta production by promoting the ubiquitination of TRAF3 and TRAF6. Also plays a role in the early recruitment of autophagy adapters to bacteria. Mediates 'Lys-29' and 'Lys-33'-linked ubiquitination of SQSTM1 leading to xenophagic targeting of bacteria and inhibition of their replication. This Homo sapiens (Human) protein is E3 ubiquitin-protein ligase RNF166 (RNF166).